Consider the following 416-residue polypeptide: Adrenocortical dysplasia protein (416 aa).

The short motif at Pro11 to Ile13 is the PWI element. Residue Ser25 is modified to Phosphoserine. Residues Glu156–Arg245 are interaction with POT1. Over residues Ile234 to Pro251 the composition is skewed to polar residues. Residues Ile234 to Ser306 form a disordered region. Low complexity predominate over residues Ser259 to Ser272. Residues Asp273–Arg292 show a composition bias toward polar residues. Residues Ser313 and Ser317 each carry the phosphoserine modification. Residue Lys345 forms a Glycyl lysine isopeptide (Lys-Gly) (interchain with G-Cter in SUMO2) linkage.

As to quaternary structure, component of the shelterin complex (telosome) composed of TERF1, TERF2, TINF2, TERF2IP ACD and POT1. Forms heterodimers with POT1. Identified in a complex with POT1 and single-stranded telomeric DNA. Interacts with STN1 and TINF2. In terms of tissue distribution, ubiquitous.

Its subcellular location is the nucleus. It localises to the chromosome. The protein localises to the telomere. Its function is as follows. Component of the shelterin complex (telosome) that is involved in the regulation of telomere length and protection. Shelterin associates with arrays of double-stranded TTAGGG repeats added by telomerase and protects chromosome ends. Without its protective activity, telomeres are no longer hidden from the DNA damage surveillance and chromosome ends are inappropriately processed by DNA repair pathways. Promotes binding of POT1 to single-stranded telomeric DNA. Modulates the inhibitory effects of POT1 on telomere elongation. The ACD-POT1 heterodimer enhances telomere elongation by recruiting telomerase to telomeres and increasing its processivity. May play a role in organogenesis. The polypeptide is Adrenocortical dysplasia protein (Mus musculus (Mouse)).